A 486-amino-acid polypeptide reads, in one-letter code: tRNA sulfurtransferase (486 aa).

The THUMP domain maps to 61–165; the sequence is AILIDVLGRI…NDHMMLIKAR (105 aa). ATP is bound by residues 183–184, lysine 265, glycine 287, and glutamine 296; that span reads LI. Cysteine 344 and cysteine 456 are oxidised to a cystine. Positions 404–481 constitute a Rhodanese domain; that stretch reads LSANDVILDI…NGFANVRVFA (78 aa). Cysteine 456 serves as the catalytic Cysteine persulfide intermediate.

The protein belongs to the ThiI family.

It is found in the cytoplasm. The catalysed reaction is [ThiI sulfur-carrier protein]-S-sulfanyl-L-cysteine + a uridine in tRNA + 2 reduced [2Fe-2S]-[ferredoxin] + ATP + H(+) = [ThiI sulfur-carrier protein]-L-cysteine + a 4-thiouridine in tRNA + 2 oxidized [2Fe-2S]-[ferredoxin] + AMP + diphosphate. It catalyses the reaction [ThiS sulfur-carrier protein]-C-terminal Gly-Gly-AMP + S-sulfanyl-L-cysteinyl-[cysteine desulfurase] + AH2 = [ThiS sulfur-carrier protein]-C-terminal-Gly-aminoethanethioate + L-cysteinyl-[cysteine desulfurase] + A + AMP + 2 H(+). It participates in cofactor biosynthesis; thiamine diphosphate biosynthesis. Catalyzes the ATP-dependent transfer of a sulfur to tRNA to produce 4-thiouridine in position 8 of tRNAs, which functions as a near-UV photosensor. Also catalyzes the transfer of sulfur to the sulfur carrier protein ThiS, forming ThiS-thiocarboxylate. This is a step in the synthesis of thiazole, in the thiamine biosynthesis pathway. The sulfur is donated as persulfide by IscS. In Mannheimia succiniciproducens (strain KCTC 0769BP / MBEL55E), this protein is tRNA sulfurtransferase.